Consider the following 190-residue polypeptide: Frataxin homolog, mitochondrial (190 aa).

Belongs to the frataxin family. Monomer (probable predominant form). Oligomer. Interacts with IscU. Component of the mitochondrial core iron-sulfur cluster (ISC) assembly complex at least composed of the cysteine desulfurase Nfs1, the scaffold protein IscU, the accessory protein bcn92/Isd11/Lyrm4, and probably fh/frataxin.

Its subcellular location is the mitochondrion. It carries out the reaction 4 Fe(2+) + O2 + 4 H(+) = 4 Fe(3+) + 2 H2O. Functionally, promotes the biosynthesis of heme as well as the assembly and repair of iron-sulfur clusters by delivering Fe(2+) to proteins involved in these pathways. May play a role in the protection against iron-catalyzed oxidative stress through its ability to catalyze the oxidation of Fe(2+) to Fe(3+). May be able to store large amounts of the metal in the form of a ferrihydrite mineral by oligomerization. Required for ecdysteroidogenesis in the prothoracic gland which is necessary for larval to pupal transition. The chain is Frataxin homolog, mitochondrial from Drosophila melanogaster (Fruit fly).